Reading from the N-terminus, the 419-residue chain is Histidine--tRNA ligase (419 aa).

The protein belongs to the class-II aminoacyl-tRNA synthetase family. As to quaternary structure, homodimer.

Its subcellular location is the cytoplasm. The enzyme catalyses tRNA(His) + L-histidine + ATP = L-histidyl-tRNA(His) + AMP + diphosphate + H(+). This is Histidine--tRNA ligase from Thiobacillus denitrificans (strain ATCC 25259 / T1).